The primary structure comprises 124 residues: Small ribosomal subunit protein uS12 (124 aa).

The segment at 1–23 (MATINQLVRKPRVRQKQKSNVPA) is disordered. Asp89 carries the post-translational modification 3-methylthioaspartic acid. Residues 103-124 (DTAGVGDRRQGRSKYGAKRPKG) form a disordered region. Residues 113 to 124 (GRSKYGAKRPKG) show a composition bias toward basic residues.

It belongs to the universal ribosomal protein uS12 family. As to quaternary structure, part of the 30S ribosomal subunit. Contacts proteins S8 and S17. May interact with IF1 in the 30S initiation complex.

Its function is as follows. With S4 and S5 plays an important role in translational accuracy. Functionally, interacts with and stabilizes bases of the 16S rRNA that are involved in tRNA selection in the A site and with the mRNA backbone. Located at the interface of the 30S and 50S subunits, it traverses the body of the 30S subunit contacting proteins on the other side and probably holding the rRNA structure together. The combined cluster of proteins S8, S12 and S17 appears to hold together the shoulder and platform of the 30S subunit. The protein is Small ribosomal subunit protein uS12 of Nitrosococcus oceani (strain ATCC 19707 / BCRC 17464 / JCM 30415 / NCIMB 11848 / C-107).